Reading from the N-terminus, the 1227-residue chain is Splicing factor 3B subunit 3 (1227 aa).

It belongs to the RSE1 family. In terms of assembly, identified in the spliceosome A complex; remains associated with the spliceosome throughout the splicing process. Component of the spliceosome B complex. Identified in the spliceosome C complex. Identified in the spliceosome E complex. Component of the U11/U12 snRNPs that are part of the U12-type spliceosome. Component of splicing factor SF3B complex. Identified in the SAGA transcription regulatory histone acetylation (HAT) complex; the interaction is RNA-independent.

The protein localises to the nucleus. In terms of biological role, involved in pre-mRNA splicing as a component of the splicing factor SF3B complex, a constituent of the spliceosome. SF3B complex is required for 'A' complex assembly formed by the stable binding of U2 snRNP to the branchpoint sequence (BPS) in pre-mRNA. Sequence independent binding of SF3A/SF3B complex upstream of the branch site is essential, it may anchor U2 snRNP to the pre-mRNA. May also be involved in the assembly of the 'E' complex. Also belongs to the minor U12-dependent spliceosome, which is involved in the splicing of rare class of nuclear pre-mRNA intron. The sequence is that of Splicing factor 3B subunit 3 from Drosophila melanogaster (Fruit fly).